Reading from the N-terminus, the 101-residue chain is CLAVATA3/ESR (CLE)-related protein 18 (101 aa).

Positions 1–25 (MHLLKGGVVLIITLILFLITSSIVA) are cleaved as a signal peptide. The segment at 37–58 (RQIPTGPDPLHNPPQPSPKHHH) is disordered. Residues P40 and P43 each carry the hydroxyproline modification. The segment covering 42–53 (GPDPLHNPPQPS) has biased composition (pro residues). An O-linked (Ara...) hydroxyproline glycan is attached at P43. Y76 is modified (sulfotyrosine). Position 84 is a hydroxyproline (P84).

It belongs to the CLV3/ESR signal peptide family. The tyrosine sulfation is critical for the function of the peptide. Post-translationally, the O-glycosylation (arabinosylation) of the hydroxyproline Pro-43 enhances binding affinity of the CLE18p peptide for its receptor. As to expression, expressed in roots, leaves, siliques and seedlings.

It localises to the secreted. The protein resides in the extracellular space. Root growth factor that regulates the pattern of root growth and lateral root development by modulating the length and the number of cortical cells in the root apical meristem (RAM), and the anticlinal asymmetric cell divisions in lateral root initiation cells. Functionally, extracellular signal peptide that regulates cell fate. Represses root apical meristem maintenance. Root growth factor that regulates the pattern of root growth and lateral root development. Regulates the transition of protophloem cells from proliferation to differentiation, thus impinging on postembryonic growth capacity of the root meristem; this signaling pathway requires CRN and CLV2. This is CLAVATA3/ESR (CLE)-related protein 18 from Arabidopsis thaliana (Mouse-ear cress).